Consider the following 368-residue polypeptide: Nicotinate-nucleotide--dimethylbenzimidazole phosphoribosyltransferase (368 aa).

Glu314 functions as the Proton acceptor in the catalytic mechanism. Residues 344 to 368 form a disordered region; that stretch reads DRADGADNSADSGASAGTVASDPTV. The span at 349 to 360 shows a compositional bias: low complexity; the sequence is ADNSADSGASAG.

This sequence belongs to the CobT family.

The catalysed reaction is 5,6-dimethylbenzimidazole + nicotinate beta-D-ribonucleotide = alpha-ribazole 5'-phosphate + nicotinate + H(+). It participates in nucleoside biosynthesis; alpha-ribazole biosynthesis; alpha-ribazole from 5,6-dimethylbenzimidazole: step 1/2. Functionally, catalyzes the synthesis of alpha-ribazole-5'-phosphate from nicotinate mononucleotide (NAMN) and 5,6-dimethylbenzimidazole (DMB). This Corynebacterium efficiens (strain DSM 44549 / YS-314 / AJ 12310 / JCM 11189 / NBRC 100395) protein is Nicotinate-nucleotide--dimethylbenzimidazole phosphoribosyltransferase.